The chain runs to 494 residues: Xylan glycosyltransferase MUCI21 (494 aa).

The Cytoplasmic portion of the chain corresponds to Met1–Lys40. Residues Leu41 to Leu61 traverse the membrane as a helical; Signal-anchor for type II membrane protein segment. At Cys62 to Arg494 the chain is on the lumenal side. Residue Asn375 is glycosylated (N-linked (GlcNAc...) asparagine).

This sequence belongs to the glycosyltransferase 61 family.

Its subcellular location is the golgi apparatus membrane. In terms of biological role, glycosyletransferase required for the proper composition and structural properties of released seed coat mucilage. Required for the production of highly branched xylan polymers in seed coat mucilage. Facilitates the addition of xylose residues directly to the xylan backbone. Xylan with xylose side chains seems to be necessary for pectin attachment to the seed surface. Essential for xylan synthesis in seed coat epidermal (SCE) cells. This is Xylan glycosyltransferase MUCI21 from Arabidopsis thaliana (Mouse-ear cress).